Here is a 105-residue protein sequence, read N- to C-terminus: Fluoride-specific ion channel FluC (105 aa).

The next 3 membrane-spanning stretches (helical) occupy residues 14 to 34 (FPLP…VFVV), 44 to 64 (LSPL…AFSL), and 79 to 99 (ALYV…GLWL). 2 residues coordinate Na(+): Gly54 and Thr57.

The protein belongs to the fluoride channel Fluc/FEX (TC 1.A.43) family.

It is found in the cell inner membrane. The catalysed reaction is fluoride(in) = fluoride(out). Its activity is regulated as follows. Na(+) is not transported, but it plays an essential structural role and its presence is essential for fluoride channel function. Fluoride-specific ion channel. Important for reducing fluoride concentration in the cell, thus reducing its toxicity. The sequence is that of Fluoride-specific ion channel FluC from Jannaschia sp. (strain CCS1).